A 46-amino-acid polypeptide reads, in one-letter code: uncharacterized protein (46 aa).

The helical transmembrane segment at 12–34 threads the bilayer; the sequence is HFNHFVIALSFIYGLTELGYLLL.

It localises to the cell membrane. This is an uncharacterized protein from Bacillus subtilis (strain 168).